Reading from the N-terminus, the 246-residue chain is Probable transcriptional regulatory protein RB5500 (246 aa).

It belongs to the TACO1 family.

The protein localises to the cytoplasm. This chain is Probable transcriptional regulatory protein RB5500, found in Rhodopirellula baltica (strain DSM 10527 / NCIMB 13988 / SH1).